The chain runs to 616 residues: Mitochondrial Rho GTPase 2 (616 aa).

Topologically, residues 1–590 are cytoplasmic; the sequence is MKRDVRILLL…HDTELSTASF (590 aa). A Miro 1 domain is found at 2–168; the sequence is KRDVRILLLG…FYYAQKAVLH (167 aa). Gly-16, Lys-17, Thr-18, and Ser-19 together coordinate GTP. Thr-18 contributes to the Mg(2+) binding site. Asp-57 is a Mg(2+) binding site. GTP contacts are provided by Ser-59, Asn-118, Lys-119, Asp-121, Ala-149, and Lys-150. 2 consecutive EF-hand domains span residues 184-219 and 304-339; these read QCKK…CFGN and FGYQ…FPYT. 7 residues coordinate Ca(2+): Asp-199, Asn-201, Glu-208, Asp-317, Asp-319, Asp-321, and Glu-328. In terms of domain architecture, Miro 2 spans 416–577; the sequence is RNVFLCRVIG…YSKLATAAAF (162 aa). GTP contacts are provided by Gly-428, Gly-430, Lys-431, Ser-432, and Ala-433. Ser-432 contributes to the Mg(2+) binding site. Glu-474 lines the Mg(2+) pocket. GTP contacts are provided by Lys-528, Asp-530, and Cys-559. Residues 591 to 613 form a helical; Anchor for type IV membrane protein membrane-spanning segment; it reads WLRVALGATVAAVVGFTLYKALL. The Mitochondrial intermembrane portion of the chain corresponds to 614 to 616; it reads RSK.

It belongs to the mitochondrial Rho GTPase family. As to quaternary structure, homodimer.

Its subcellular location is the mitochondrion outer membrane. It carries out the reaction GTP + H2O = GDP + phosphate + H(+). It catalyses the reaction ATP + H2O = ADP + phosphate + H(+). The enzyme catalyses UTP + H2O = UDP + phosphate + H(+). Functionally, atypical mitochondrial nucleoside-triphosphatase (NTPase) involved in mitochondrial trafficking. Probably involved in control of anterograde transport of mitochondria and their subcellular distribution. Can hydrolyze GTP, ATP and UTP. The sequence is that of Mitochondrial Rho GTPase 2 (rhot2) from Xenopus tropicalis (Western clawed frog).